The primary structure comprises 250 residues: Lymphotoxin-beta (250 aa).

Residues 1–26 are Cytoplasmic-facing; sequence MGAPGLETRAGGPNGKSYLLLASVGA. The chain crosses the membrane as a helical; Signal-anchor for type II membrane protein span at residues 27-47; sequence AVLGTLLLSVPITVLTVLALM. Residues 48 to 250 lie on the Extracellular side of the membrane; the sequence is PQEQGGQVAD…KTFFGAVMVG (203 aa). The 163-residue stretch at 87–249 folds into the THD domain; sequence PAAHLIGIAK…GKTFFGAVMV (163 aa). Asn228 is a glycosylation site (N-linked (GlcNAc...) asparagine).

Belongs to the tumor necrosis factor family. As to quaternary structure, heterotrimer of either two LTB and one LTA subunits or (less prevalent) two LTA and one LTB subunits.

The protein resides in the membrane. Its function is as follows. Cytokine that binds to LTBR/TNFRSF3. May play a specific role in immune response regulation. Provides the membrane anchor for the attachment of the heterotrimeric complex to the cell surface. The chain is Lymphotoxin-beta (LTB) from Notamacropus eugenii (Tammar wallaby).